We begin with the raw amino-acid sequence, 472 residues long: Methylenetetrahydrofolate--tRNA-(uracil-5-)-methyltransferase TrmFO (472 aa).

10–15 (GGGLAG) contacts FAD.

The protein belongs to the MnmG family. TrmFO subfamily. It depends on FAD as a cofactor.

The protein localises to the cytoplasm. It carries out the reaction uridine(54) in tRNA + (6R)-5,10-methylene-5,6,7,8-tetrahydrofolate + NADH + H(+) = 5-methyluridine(54) in tRNA + (6S)-5,6,7,8-tetrahydrofolate + NAD(+). It catalyses the reaction uridine(54) in tRNA + (6R)-5,10-methylene-5,6,7,8-tetrahydrofolate + NADPH + H(+) = 5-methyluridine(54) in tRNA + (6S)-5,6,7,8-tetrahydrofolate + NADP(+). Functionally, catalyzes the folate-dependent formation of 5-methyl-uridine at position 54 (M-5-U54) in all tRNAs. The chain is Methylenetetrahydrofolate--tRNA-(uracil-5-)-methyltransferase TrmFO from Mesorhizobium japonicum (strain LMG 29417 / CECT 9101 / MAFF 303099) (Mesorhizobium loti (strain MAFF 303099)).